Here is a 122-residue protein sequence, read N- to C-terminus: Small ribosomal subunit protein uS13 (122 aa).

The interval 93–122 (RLSLPVRGQRTKTNSRTRKGKRKTVAGKKK) is disordered. The segment covering 101–122 (QRTKTNSRTRKGKRKTVAGKKK) has biased composition (basic residues).

It belongs to the universal ribosomal protein uS13 family. In terms of assembly, part of the 30S ribosomal subunit. Forms a loose heterodimer with protein S19. Forms two bridges to the 50S subunit in the 70S ribosome.

Its function is as follows. Located at the top of the head of the 30S subunit, it contacts several helices of the 16S rRNA. In the 70S ribosome it contacts the 23S rRNA (bridge B1a) and protein L5 of the 50S subunit (bridge B1b), connecting the 2 subunits; these bridges are implicated in subunit movement. Contacts the tRNAs in the A and P-sites. This chain is Small ribosomal subunit protein uS13, found in Chlamydia abortus (strain DSM 27085 / S26/3) (Chlamydophila abortus).